Here is a 306-residue protein sequence, read N- to C-terminus: RNA-binding protein Raly (306 aa).

Residue S2 is modified to N-acetylserine. K4 participates in a covalent cross-link: Glycyl lysine isopeptide (Lys-Gly) (interchain with G-Cter in SUMO2). Positions 21 to 92 (SRVFIGNLNT…QTLDINMAGE (72 aa)) constitute an RRM domain. K44 bears the N6-acetyllysine mark. S63 carries the phosphoserine modification. Residues K94 and K99 each participate in a glycyl lysine isopeptide (Lys-Gly) (interchain with G-Cter in SUMO2) cross-link. S106 and S135 each carry phosphoserine. Residue K159 forms a Glycyl lysine isopeptide (Lys-Gly) (interchain with G-Cter in SUMO2) linkage. Position 165 is an N6-acetyllysine; alternate (K165). A Glycyl lysine isopeptide (Lys-Gly) (interchain with G-Cter in SUMO2); alternate cross-link involves residue K165. Glycyl lysine isopeptide (Lys-Gly) (interchain with G-Cter in SUMO2) cross-links involve residues K179 and K191. A coiled-coil region spans residues 183 to 216 (KSSELQAIKTELTQIKSNIDALLSRLEQIAAEQK). A disordered region spans residues 215 to 306 (QKANPDGKKK…DTDADDGALQ (92 aa)). A compositionally biased stretch (basic and acidic residues) spans 217–226 (ANPDGKKKGD). Over residues 227 to 252 (GGGAGGGGGGGGSGGGGSGGGGGGGS) the composition is skewed to gly residues. Residues 227–253 (GGGAGGGGGGGGSGGGGSGGGGGGGSS) are epitope (recognized by BKRF1 antibodies). T262 carries the post-translational modification Phosphothreonine. S264 is subject to Phosphoserine. T286 is subject to Phosphothreonine. The segment covering 287-297 (HSEEELEHSQD) has biased composition (basic and acidic residues). A phosphoserine mark is found at S288 and S295. T298 is subject to Phosphothreonine.

This sequence belongs to the RRM HNRPC family. RALY subfamily. Identified in the spliceosome C complex. Interacts (through its RNA-binding domain) with FUS (through its RNA-binding domain); both are components of the same RNPs. As to expression, expressed in heart, brain, lung, liver, skeletal muscle, kidney and pancreas. Weakly expressed in placenta.

The protein resides in the nucleus. RNA-binding protein that acts as a transcriptional cofactor for cholesterol biosynthetic genes in the liver. Binds the lipid-responsive non-coding RNA LeXis and is required for LeXis-mediated effect on cholesterogenesis. May be a heterogeneous nuclear ribonucleoprotein (hnRNP). This Homo sapiens (Human) protein is RNA-binding protein Raly (RALY).